The chain runs to 250 residues: Uridylate kinase (250 aa).

19–22 (KLSG) lines the ATP pocket. A UMP-binding site is contributed by Gly-61. Gly-62 and Arg-66 together coordinate ATP. Residues Asp-81 and 142–149 (TGNPFFTT) contribute to the UMP site. ATP contacts are provided by Thr-169, Gln-170, Tyr-175, and Asp-178.

It belongs to the UMP kinase family. As to quaternary structure, homohexamer.

The protein resides in the cytoplasm. The enzyme catalyses UMP + ATP = UDP + ADP. It participates in pyrimidine metabolism; CTP biosynthesis via de novo pathway; UDP from UMP (UMPK route): step 1/1. Inhibited by UTP. Catalyzes the reversible phosphorylation of UMP to UDP. The polypeptide is Uridylate kinase (Rhodospirillum rubrum (strain ATCC 11170 / ATH 1.1.1 / DSM 467 / LMG 4362 / NCIMB 8255 / S1)).